A 468-amino-acid polypeptide reads, in one-letter code: uncharacterized protein (468 aa).

A disordered region spans residues 447-468 (AVHVSNGDKPKVALPDTQLGSH).

It belongs to the mycobacterial PPE family.

This is an uncharacterized protein from Mycobacterium tuberculosis (strain ATCC 25618 / H37Rv).